We begin with the raw amino-acid sequence, 192 residues long: Thymidylate kinase (192 aa).

7–14 is a binding site for ATP; sequence GVDGVGKS.

Belongs to the thymidylate kinase family.

It carries out the reaction dTMP + ATP = dTDP + ADP. In terms of biological role, phosphorylation of dTMP to form dTDP in both de novo and salvage pathways of dTTP synthesis. This Campylobacter fetus subsp. fetus (strain 82-40) protein is Thymidylate kinase.